A 351-amino-acid chain; its full sequence is NADP-dependent isopropanol dehydrogenase (351 aa).

Zn(2+) contacts are provided by cysteine 37, histidine 59, glutamate 60, and aspartate 150. NADP(+) is bound by residues 175–178 (IGAV), 198–200 (GSR), tyrosine 218, 265–267 (INY), and lysine 340.

The protein belongs to the zinc-containing alcohol dehydrogenase family. Homotetramer. It depends on Zn(2+) as a cofactor.

It catalyses the reaction propan-2-ol + NADP(+) = acetone + NADPH + H(+). Alcohol dehydrogenase with a preference for medium chain secondary alcohols, such as 2-butanol and isopropanol. Has very low activity with primary alcohols, such as ethanol. Under physiological conditions, the enzyme reduces aldehydes and 2-ketones to produce secondary alcohols. Is active with acetaldehyde and propionaldehyde. The sequence is that of NADP-dependent isopropanol dehydrogenase (adh) from Clostridium beijerinckii (Clostridium MP).